A 198-amino-acid chain; its full sequence is Probable host range protein 2 (198 aa).

Residues 171 to 198 form a disordered region; the sequence is SDDDDDNDNADDDEEDDDEVNDIEDDYE.

It belongs to the poxviridae C7 protein family.

Functionally, plays a role for multiplication of the virus in different cell types. This is Probable host range protein 2 from Bos taurus (Bovine).